A 296-amino-acid polypeptide reads, in one-letter code: 4-hydroxy-tetrahydrodipicolinate synthase (296 aa).

Residue Thr-49 coordinates pyruvate. Tyr-137 serves as the catalytic Proton donor/acceptor. The active-site Schiff-base intermediate with substrate is Lys-166. Ile-208 contributes to the pyruvate binding site.

The protein belongs to the DapA family. Homotetramer; dimer of dimers.

It localises to the cytoplasm. It catalyses the reaction L-aspartate 4-semialdehyde + pyruvate = (2S,4S)-4-hydroxy-2,3,4,5-tetrahydrodipicolinate + H2O + H(+). The protein operates within amino-acid biosynthesis; L-lysine biosynthesis via DAP pathway; (S)-tetrahydrodipicolinate from L-aspartate: step 3/4. Functionally, catalyzes the condensation of (S)-aspartate-beta-semialdehyde [(S)-ASA] and pyruvate to 4-hydroxy-tetrahydrodipicolinate (HTPA). The polypeptide is 4-hydroxy-tetrahydrodipicolinate synthase (Chlorobium limicola (strain DSM 245 / NBRC 103803 / 6330)).